The sequence spans 161 residues: E3 ubiquitin ligase complex SCF subunit sconC (161 aa).

The interaction with the F-box domain of F-box proteins stretch occupies residues 102–161 (ILAANYLDIKPLLDIGCKTVANMIKGKSPEEIRKTFNIQNDFTPEEEDQIRRENEWAEDR).

It belongs to the SKP1 family. As to quaternary structure, component of the SCF (SKP1-CUL1-F-box protein) E3 ubiquitin ligase complexes.

The protein operates within protein modification; protein ubiquitination. Functionally, essential component of the SCF (SKP1-CUL1-F-box protein) E3 ubiquitin ligase complexes, which mediate the ubiquitination and subsequent proteasomal degradation of target proteins. Controls sulfur metabolite repression, probably by mediating the inactivation or degradation of the metR transcription factor. This chain is E3 ubiquitin ligase complex SCF subunit sconC (sconC), found in Emericella nidulans (strain FGSC A4 / ATCC 38163 / CBS 112.46 / NRRL 194 / M139) (Aspergillus nidulans).